Here is an 825-residue protein sequence, read N- to C-terminus: ATP-dependent RNA helicase DBP4 (825 aa).

The tract at residues 1–34 is disordered; the sequence is MAAGNAKGGFAHRNKSVPKKTDAKSLKRKRGQED. A compositionally biased stretch (basic and acidic residues) spans 19–34; that stretch reads KKTDAKSLKRKRGQED. A Q motif motif is present at residues 53-81; the sequence is KQFTDLPLCEATASGLRASHFEVLTDVQR. The Helicase ATP-binding domain maps to 84 to 258; that stretch reads IPLALKGRDI…RLSLKEPEYV (175 aa). 97–104 serves as a coordination point for ATP; the sequence is AKTGSGKT. A DEAD box motif is present at residues 206–209; the sequence is DEAD. Positions 284–439 constitute a Helicase C-terminal domain; that stretch reads KLDTLFGFLR…NKKKSIKNEL (156 aa). Disordered regions lie at residues 508-536 and 676-825; these read NASR…KQVR and AESE…LLED. Basic and acidic residues-rich tracts occupy residues 677-691 and 700-714; these read ESEK…DKQA and RERQ…ELER. Acidic residues-rich tracts occupy residues 730–739, 761–770, and 805–816; these read GEGDEGDEDP, GEDEGDDGEV, and MAEEPENLEDLE.

The protein belongs to the DEAD box helicase family. DDX10/DBP4 subfamily. Interacts with the U3 and U14 snoRNAs. Associates with pre-ribosomal complexes.

It localises to the nucleus. It is found in the nucleolus. The enzyme catalyses ATP + H2O = ADP + phosphate + H(+). Its function is as follows. ATP-dependent RNA helicase required for ribosome biogenesis. Involved in the release of U14 snoRNA in pre-ribosomal complexes. Required for pre-rRNA cleavage at site A2. In Chaetomium globosum (strain ATCC 6205 / CBS 148.51 / DSM 1962 / NBRC 6347 / NRRL 1970) (Soil fungus), this protein is ATP-dependent RNA helicase DBP4 (DBP4).